Here is a 338-residue protein sequence, read N- to C-terminus: Penicillin V acylase (338 aa).

The propeptide at 1–3 (MLG) is removed in mature form. The active-site Nucleophile is C4.

This sequence belongs to the peptidase C59 family. In terms of assembly, homotetramer. Post-translationally, expressed as an inactive precursor that is cleaved autocatalytically at Gly-3/Cys-4 to generate an active enzyme. Processing exposes a catalytic N-terminal nucleophile residue with a free alpha amino group.

The catalysed reaction is a penicillin + H2O = 6-aminopenicillanate + a carboxylate. Its activity is regulated as follows. Hydrolase activity is rapidly inhibited by lysine modifying reagents. Its function is as follows. Catalyzes the hydrolysis of penicillin V to 6-aminopenicillanate (6-APA). Exhibits high specificity for penicillin V. Penicillin G and other related compounds are hydrolyzed at less than 10% of the rate of penicillin V. Among the cephalosporins, cephalosporin C is resistant to cleavage, whereas cephalosporin G is cleaved at about 1% of the rate of cleavage of penicillin V. This Lysinibacillus sphaericus (Bacillus sphaericus) protein is Penicillin V acylase.